Here is a 79-residue protein sequence, read N- to C-terminus: Acyl carrier protein (79 aa).

The Carrier domain occupies 2–77; it reads SDIAERVKKI…DAVKFLEKNS (76 aa). The residue at position 37 (Ser-37) is an O-(pantetheine 4'-phosphoryl)serine.

Belongs to the acyl carrier protein (ACP) family. Post-translationally, 4'-phosphopantetheine is transferred from CoA to a specific serine of apo-ACP by AcpS. This modification is essential for activity because fatty acids are bound in thioester linkage to the sulfhydryl of the prosthetic group.

Its subcellular location is the cytoplasm. Its pathway is lipid metabolism; fatty acid biosynthesis. Carrier of the growing fatty acid chain in fatty acid biosynthesis. This is Acyl carrier protein from Methylobacterium radiotolerans (strain ATCC 27329 / DSM 1819 / JCM 2831 / NBRC 15690 / NCIMB 10815 / 0-1).